The primary structure comprises 89 residues: Small ribosomal subunit protein bS20 (89 aa).

The tract at residues Met-1–Met-28 is disordered.

The protein belongs to the bacterial ribosomal protein bS20 family.

Binds directly to 16S ribosomal RNA. The polypeptide is Small ribosomal subunit protein bS20 (Koribacter versatilis (strain Ellin345)).